Consider the following 197-residue polypeptide: Pyridoxal 5'-phosphate synthase subunit PdxT (197 aa).

53 to 55 provides a ligand contact to L-glutamine; it reads GES. Cys85 (nucleophile) is an active-site residue. L-glutamine-binding positions include Arg114 and 142–143; that span reads IR. Catalysis depends on charge relay system residues His179 and Glu181.

This sequence belongs to the glutaminase PdxT/SNO family. As to quaternary structure, in the presence of PdxS, forms a dodecamer of heterodimers. Only shows activity in the heterodimer.

The enzyme catalyses aldehydo-D-ribose 5-phosphate + D-glyceraldehyde 3-phosphate + L-glutamine = pyridoxal 5'-phosphate + L-glutamate + phosphate + 3 H2O + H(+). It catalyses the reaction L-glutamine + H2O = L-glutamate + NH4(+). The protein operates within cofactor biosynthesis; pyridoxal 5'-phosphate biosynthesis. Its function is as follows. Catalyzes the hydrolysis of glutamine to glutamate and ammonia as part of the biosynthesis of pyridoxal 5'-phosphate. The resulting ammonia molecule is channeled to the active site of PdxS. This Pyrococcus furiosus (strain ATCC 43587 / DSM 3638 / JCM 8422 / Vc1) protein is Pyridoxal 5'-phosphate synthase subunit PdxT.